Consider the following 507-residue polypeptide: Ribosomal protein uS12 methylthiotransferase RimO (507 aa).

The region spanning 13–124 is the MTTase N-terminal domain; sequence RRVALLTLGC…ISDRLGAVLA (112 aa). 6 residues coordinate [4Fe-4S] cluster: cysteine 22, cysteine 58, cysteine 87, cysteine 205, cysteine 209, and cysteine 212. The 232-residue stretch at 191-422 folds into the Radical SAM core domain; that stretch reads LDTGPVASLK…ALADELCAQR (232 aa). Positions 424 to 497 constitute a TRAM domain; sequence EQRLGSTVQV…GVDLVAVPDA (74 aa).

The protein belongs to the methylthiotransferase family. RimO subfamily. The cofactor is [4Fe-4S] cluster.

Its subcellular location is the cytoplasm. The enzyme catalyses L-aspartate(89)-[ribosomal protein uS12]-hydrogen + (sulfur carrier)-SH + AH2 + 2 S-adenosyl-L-methionine = 3-methylsulfanyl-L-aspartate(89)-[ribosomal protein uS12]-hydrogen + (sulfur carrier)-H + 5'-deoxyadenosine + L-methionine + A + S-adenosyl-L-homocysteine + 2 H(+). Catalyzes the methylthiolation of an aspartic acid residue of ribosomal protein uS12. The polypeptide is Ribosomal protein uS12 methylthiotransferase RimO (Salinispora tropica (strain ATCC BAA-916 / DSM 44818 / JCM 13857 / NBRC 105044 / CNB-440)).